A 209-amino-acid chain; its full sequence is Large ribosomal subunit protein uL3 (209 aa).

This sequence belongs to the universal ribosomal protein uL3 family. As to quaternary structure, part of the 50S ribosomal subunit. Forms a cluster with proteins L14 and L19.

Functionally, one of the primary rRNA binding proteins, it binds directly near the 3'-end of the 23S rRNA, where it nucleates assembly of the 50S subunit. The sequence is that of Large ribosomal subunit protein uL3 from Nitratidesulfovibrio vulgaris (strain DSM 19637 / Miyazaki F) (Desulfovibrio vulgaris).